We begin with the raw amino-acid sequence, 97 residues long: MIRHLVLFKLNDGVGRDEPRVLAGVEAFRALGGQIEDLRFWECAWNISDRPIAYDFAINSAVDDADALKRYLEHPAHQAGVALWREFATWVIADYEF.

The 94-residue stretch at 2–95 (IRHLVLFKLN…EFATWVIADY (94 aa)) folds into the Stress-response A/B barrel domain.

This is an uncharacterized protein from Streptomyces coelicolor (strain ATCC BAA-471 / A3(2) / M145).